A 148-amino-acid chain; its full sequence is UPF0179 protein Ta1159 (148 aa).

Belongs to the UPF0179 family.

This Thermoplasma acidophilum (strain ATCC 25905 / DSM 1728 / JCM 9062 / NBRC 15155 / AMRC-C165) protein is UPF0179 protein Ta1159.